A 439-amino-acid polypeptide reads, in one-letter code: MRLATDQLGRPPQRVAVLSVHTSPLAQPGTGDAGGMNVYVLQSALHMARRGVEVEIFTRATTSADPPVVRVAPGVLVRNVVAGPFEGLDKYDLPTQLCAFTAGVLRAEATHEPGYYDIVHSHYWLSGQVGWLARDRWAVPLVHTAHTLAAVKNAALAEGDSPEPPLRAVGEQQVVDEADRLIVNTELEAEQLVSLHNADPSRIDVVHPGVDLDTFTPGDQAAARAALGLDPRETVVAFVGRIQPLKAPDILLRAAAKLPDVRVLVAGGPSGSGLAAPDNLVALADELGISERVTFLPPQSREDLVRVYRAADLVAVPSYSESFGLVAVEAQACGTPVVAAAVGGLPVAVRDGVTGALVDGHDVGDWAHTIDSLLSRGPATMRRAAVEHAATFSWAHTVDDLLASYGRAISDYRDRHPHADETLSRRTARRFSRRRGVRA.

Position 21 (His21) interacts with 1D-myo-inositol 3-phosphate. Residues 27–28 (QP) and Gly35 each bind UDP-N-acetyl-alpha-D-glucosamine. 1D-myo-inositol 3-phosphate contacts are provided by residues 32 to 37 (DAGGMN), Lys90, Tyr123, Thr147, and Arg167. UDP-N-acetyl-alpha-D-glucosamine-binding residues include Arg241, Lys246, and Gln299. Residues Tyr308, Arg309, and Ala311 each contribute to the Mg(2+) site. Residues Glu321 and Glu329 each coordinate UDP-N-acetyl-alpha-D-glucosamine. Mg(2+) is bound at residue Thr335.

Belongs to the glycosyltransferase group 1 family. MshA subfamily. As to quaternary structure, homodimer.

It carries out the reaction 1D-myo-inositol 3-phosphate + UDP-N-acetyl-alpha-D-glucosamine = 1D-myo-inositol 2-acetamido-2-deoxy-alpha-D-glucopyranoside 3-phosphate + UDP + H(+). Its function is as follows. Catalyzes the transfer of a N-acetyl-glucosamine moiety to 1D-myo-inositol 3-phosphate to produce 1D-myo-inositol 2-acetamido-2-deoxy-glucopyranoside 3-phosphate in the mycothiol biosynthesis pathway. The protein is D-inositol 3-phosphate glycosyltransferase of Mycobacterium sp. (strain JLS).